A 369-amino-acid chain; its full sequence is Probable dual-specificity RNA methyltransferase RlmN (369 aa).

Glu98 functions as the Proton acceptor in the catalytic mechanism. The 236-residue stretch at 106–341 folds into the Radical SAM core domain; it reads STSRNTLCIS…VTVRKSRGAD (236 aa). Cys113 and Cys346 are oxidised to a cystine. [4Fe-4S] cluster contacts are provided by Cys120, Cys124, and Cys127. S-adenosyl-L-methionine contacts are provided by residues 171–172, Ser204, 227–229, and Asn303; these read GE and SLH. Cys346 acts as the S-methylcysteine intermediate in catalysis.

Belongs to the radical SAM superfamily. RlmN family. [4Fe-4S] cluster is required as a cofactor.

The protein localises to the cytoplasm. It carries out the reaction adenosine(2503) in 23S rRNA + 2 reduced [2Fe-2S]-[ferredoxin] + 2 S-adenosyl-L-methionine = 2-methyladenosine(2503) in 23S rRNA + 5'-deoxyadenosine + L-methionine + 2 oxidized [2Fe-2S]-[ferredoxin] + S-adenosyl-L-homocysteine. The catalysed reaction is adenosine(37) in tRNA + 2 reduced [2Fe-2S]-[ferredoxin] + 2 S-adenosyl-L-methionine = 2-methyladenosine(37) in tRNA + 5'-deoxyadenosine + L-methionine + 2 oxidized [2Fe-2S]-[ferredoxin] + S-adenosyl-L-homocysteine. In terms of biological role, specifically methylates position 2 of adenine 2503 in 23S rRNA and position 2 of adenine 37 in tRNAs. In Chloroherpeton thalassium (strain ATCC 35110 / GB-78), this protein is Probable dual-specificity RNA methyltransferase RlmN.